Consider the following 45-residue polypeptide: Iota-conotoxin-like R11.12 (45 aa).

Cystine bridges form between Cys-5–Cys-19, Cys-12–Cys-22, Cys-18–Cys-27, and Cys-21–Cys-36. The residue at position 43 (Leu-43) is a D-leucine. Residue Arg-45 is a propeptide, removed by a carboxypeptidase.

The protein belongs to the conotoxin I1 superfamily. In terms of tissue distribution, expressed by the venom duct.

Its subcellular location is the secreted. Functionally, iota-conotoxins bind to voltage-gated sodium channels (Nav) and act as agonists by shifting the voltage-dependence of activation to more hyperpolarized levels. Produces general excitatory symptoms. The chain is Iota-conotoxin-like R11.12 from Conus radiatus (Rayed cone).